Reading from the N-terminus, the 317-residue chain is 4-diphosphocytidyl-2-C-methyl-D-erythritol kinase (317 aa).

The active site involves lysine 11. 99-109 (PVAAGLAGGST) lines the ATP pocket. The active site involves aspartate 141.

The protein belongs to the GHMP kinase family. IspE subfamily.

It catalyses the reaction 4-CDP-2-C-methyl-D-erythritol + ATP = 4-CDP-2-C-methyl-D-erythritol 2-phosphate + ADP + H(+). It functions in the pathway isoprenoid biosynthesis; isopentenyl diphosphate biosynthesis via DXP pathway; isopentenyl diphosphate from 1-deoxy-D-xylulose 5-phosphate: step 3/6. Functionally, catalyzes the phosphorylation of the position 2 hydroxy group of 4-diphosphocytidyl-2C-methyl-D-erythritol. This is 4-diphosphocytidyl-2-C-methyl-D-erythritol kinase from Trichormus variabilis (strain ATCC 29413 / PCC 7937) (Anabaena variabilis).